A 364-amino-acid chain; its full sequence is Membrane-bound lytic murein transglycosylase C (364 aa).

Positions 1 to 19 (MNKYKKFLPLLVLIPFLAS) are cleaved as a signal peptide. Cysteine 20 is lipidated: N-palmitoyl cysteine. Cysteine 20 carries S-diacylglycerol cysteine lipidation.

The protein belongs to the transglycosylase Slt family.

The protein localises to the cell outer membrane. The catalysed reaction is Exolytic cleavage of the (1-&gt;4)-beta-glycosidic linkage between N-acetylmuramic acid (MurNAc) and N-acetylglucosamine (GlcNAc) residues in peptidoglycan, from either the reducing or the non-reducing ends of the peptidoglycan chains, with concomitant formation of a 1,6-anhydrobond in the MurNAc residue.. Functionally, murein-degrading enzyme. May play a role in recycling of muropeptides during cell elongation and/or cell division. This is Membrane-bound lytic murein transglycosylase C from Glaesserella parasuis serovar 5 (strain SH0165) (Haemophilus parasuis).